Here is a 152-residue protein sequence, read N- to C-terminus: Protein SprT-like (152 aa).

In terms of domain architecture, SprT-like spans asparagine 13–leucine 148. Histidine 72 is a binding site for Zn(2+). Glutamate 73 is a catalytic residue. Residue histidine 76 participates in Zn(2+) binding.

The protein belongs to the SprT family. Zn(2+) serves as cofactor.

The protein resides in the cytoplasm. This chain is Protein SprT-like, found in Streptococcus agalactiae serotype III (strain NEM316).